The chain runs to 294 residues: UDP-3-O-acyl-N-acetylglucosamine deacetylase (294 aa).

His75, His232, and Asp236 together coordinate Zn(2+). Catalysis depends on His259, which acts as the Proton donor.

It belongs to the LpxC family. Zn(2+) serves as cofactor.

The catalysed reaction is a UDP-3-O-[(3R)-3-hydroxyacyl]-N-acetyl-alpha-D-glucosamine + H2O = a UDP-3-O-[(3R)-3-hydroxyacyl]-alpha-D-glucosamine + acetate. It functions in the pathway glycolipid biosynthesis; lipid IV(A) biosynthesis; lipid IV(A) from (3R)-3-hydroxytetradecanoyl-[acyl-carrier-protein] and UDP-N-acetyl-alpha-D-glucosamine: step 2/6. Its function is as follows. Catalyzes the hydrolysis of UDP-3-O-myristoyl-N-acetylglucosamine to form UDP-3-O-myristoylglucosamine and acetate, the committed step in lipid A biosynthesis. In Campylobacter jejuni (strain RM1221), this protein is UDP-3-O-acyl-N-acetylglucosamine deacetylase.